Consider the following 185-residue polypeptide: Ribosome-recycling factor (185 aa).

This sequence belongs to the RRF family.

It is found in the cytoplasm. Its function is as follows. Responsible for the release of ribosomes from messenger RNA at the termination of protein biosynthesis. May increase the efficiency of translation by recycling ribosomes from one round of translation to another. This Alteromonas mediterranea (strain DSM 17117 / CIP 110805 / LMG 28347 / Deep ecotype) protein is Ribosome-recycling factor.